Here is a 214-residue protein sequence, read N- to C-terminus: ATP-dependent Clp protease proteolytic subunit (214 aa).

Residue Ser113 is the Nucleophile of the active site. His138 is a catalytic residue.

This sequence belongs to the peptidase S14 family. As to quaternary structure, fourteen ClpP subunits assemble into 2 heptameric rings which stack back to back to give a disk-like structure with a central cavity, resembling the structure of eukaryotic proteasomes.

It is found in the cytoplasm. The enzyme catalyses Hydrolysis of proteins to small peptides in the presence of ATP and magnesium. alpha-casein is the usual test substrate. In the absence of ATP, only oligopeptides shorter than five residues are hydrolyzed (such as succinyl-Leu-Tyr-|-NHMec, and Leu-Tyr-Leu-|-Tyr-Trp, in which cleavage of the -Tyr-|-Leu- and -Tyr-|-Trp bonds also occurs).. Functionally, cleaves peptides in various proteins in a process that requires ATP hydrolysis. Has a chymotrypsin-like activity. Plays a major role in the degradation of misfolded proteins. The sequence is that of ATP-dependent Clp protease proteolytic subunit from Alkalilimnicola ehrlichii (strain ATCC BAA-1101 / DSM 17681 / MLHE-1).